Consider the following 457-residue polypeptide: MIIYNTLTRSKELFVPLDVNNVKIYVCGPTVYDFAHIGNSRSIVIYDILFRLLNVLYPKVTYIRNITDIDDKIINVAQNNNQNIYDVTARYIKAFNEDMGRLNCLKPTYEPRATENIDVMLALIEKLINYGHAYICDNTVFFDIESYPAYGKLSGRNIMELIYGSRIDIEVGKKHPGDFVLWKPATDIDNKLMSCWPSPWGVGRPGWHIECSAMSYNYLGENFDIHGGGADLQFPHHENELAQSCCAFPNSYYAKYWIHNGFLTVNHEKMSKSLGNFLTVRQLLDSGIRGEVIRYIFLSTHYRKPLDWNDNVVSNAQESLNRIYMALNVTDERLLLDDVEVSDEIISCLKDDMNTPKAIAVLHEMVTRINKASDIDKKVYFIKVLIKSANFLGILYHSWQEWFKVDNDQDIIQLIHERKMAKTNGDFRKADRIRQILLDKGIVLSDNKDGTTLWYRS.

Residue C27 coordinates Zn(2+). Positions 29–39 (PTVYDFAHIGN) match the 'HIGH' region motif. C211, H236, and E240 together coordinate Zn(2+). The short motif at 269-273 (KMSKS) is the 'KMSKS' region element. K272 provides a ligand contact to ATP.

This sequence belongs to the class-I aminoacyl-tRNA synthetase family. In terms of assembly, monomer. The cofactor is Zn(2+).

The protein resides in the cytoplasm. It carries out the reaction tRNA(Cys) + L-cysteine + ATP = L-cysteinyl-tRNA(Cys) + AMP + diphosphate. The polypeptide is Cysteine--tRNA ligase (Ehrlichia ruminantium (strain Welgevonden)).